A 291-amino-acid polypeptide reads, in one-letter code: Pantothenate synthetase (291 aa).

30 to 37 (MGYLHVGH) serves as a coordination point for ATP. Histidine 37 functions as the Proton donor in the catalytic mechanism. Residue glutamine 61 coordinates (R)-pantoate. Position 61 (glutamine 61) interacts with beta-alanine. ATP is bound at residue 147 to 150 (GEKD). (R)-pantoate is bound at residue glutamine 153. Residues valine 176 and 184–187 (CSSR) each bind ATP.

Belongs to the pantothenate synthetase family. As to quaternary structure, homodimer.

The protein resides in the cytoplasm. The catalysed reaction is (R)-pantoate + beta-alanine + ATP = (R)-pantothenate + AMP + diphosphate + H(+). It functions in the pathway cofactor biosynthesis; (R)-pantothenate biosynthesis; (R)-pantothenate from (R)-pantoate and beta-alanine: step 1/1. Catalyzes the condensation of pantoate with beta-alanine in an ATP-dependent reaction via a pantoyl-adenylate intermediate. The chain is Pantothenate synthetase from Sinorhizobium medicae (strain WSM419) (Ensifer medicae).